The sequence spans 253 residues: Imidazole glycerol phosphate synthase subunit HisF (253 aa).

Catalysis depends on residues aspartate 11 and aspartate 130.

It belongs to the HisA/HisF family. In terms of assembly, heterodimer of HisH and HisF.

Its subcellular location is the cytoplasm. It carries out the reaction 5-[(5-phospho-1-deoxy-D-ribulos-1-ylimino)methylamino]-1-(5-phospho-beta-D-ribosyl)imidazole-4-carboxamide + L-glutamine = D-erythro-1-(imidazol-4-yl)glycerol 3-phosphate + 5-amino-1-(5-phospho-beta-D-ribosyl)imidazole-4-carboxamide + L-glutamate + H(+). It participates in amino-acid biosynthesis; L-histidine biosynthesis; L-histidine from 5-phospho-alpha-D-ribose 1-diphosphate: step 5/9. Functionally, IGPS catalyzes the conversion of PRFAR and glutamine to IGP, AICAR and glutamate. The HisF subunit catalyzes the cyclization activity that produces IGP and AICAR from PRFAR using the ammonia provided by the HisH subunit. This Acetivibrio thermocellus (strain ATCC 27405 / DSM 1237 / JCM 9322 / NBRC 103400 / NCIMB 10682 / NRRL B-4536 / VPI 7372) (Clostridium thermocellum) protein is Imidazole glycerol phosphate synthase subunit HisF.